The following is a 361-amino-acid chain: MLYNLLLPHIHNSHIANLFHYITFRSGLAIIITLSLSFITGPILIEFLRSIQKNGQPIRSDGPESHQTKVGTPTMGGIMIILSSCLSTLLLADLTNKYIWITLFGFISFGIIGFMDDYAKVTKNNHYGVRGKSKLLLQGIISVIICVLLEYLDKSPSHLLNVPFFKNLSLDLGYCYIVFAIFVIVGSSNAVNLTDGLDGLATVPIAFTAGSFALISYLVGNLIYSNYLQLTYIPNTGELTVLCAGLVGSCLGFLWFNAQPAEVFMGDTGSLSLGGVLGIISVITKHEIVLAIVGGLFVIETASVILQVYYFKATKGKRIFKMAPLHHHFEKHGWAESKVVIRFWIISVIFALIGLSSLKLR.

10 helical membrane passes run 28–48 (LAIIITLSLSFITGPILIEFL), 74–94 (TMGGIMIILSSCLSTLLLADL), 99–119 (IWITLFGFISFGIIGFMDDYA), 133–153 (SKLLLQGIISVIICVLLEYLD), 168–188 (LSLDLGYCYIVFAIFVIVGSS), 203–223 (VPIAFTAGSFALISYLVGNLI), 236–256 (TGELTVLCAGLVGSCLGFLWF), 263–283 (VFMGDTGSLSLGGVLGIISVI), 288–308 (IVLAIVGGLFVIETASVILQV), and 338–358 (KVVIRFWIISVIFALIGLSSL).

The protein belongs to the glycosyltransferase 4 family. MraY subfamily. Mg(2+) serves as cofactor.

The protein localises to the cell membrane. It carries out the reaction UDP-N-acetyl-alpha-D-muramoyl-L-alanyl-gamma-D-glutamyl-meso-2,6-diaminopimeloyl-D-alanyl-D-alanine + di-trans,octa-cis-undecaprenyl phosphate = di-trans,octa-cis-undecaprenyl diphospho-N-acetyl-alpha-D-muramoyl-L-alanyl-D-glutamyl-meso-2,6-diaminopimeloyl-D-alanyl-D-alanine + UMP. The protein operates within cell wall biogenesis; peptidoglycan biosynthesis. Its function is as follows. Catalyzes the initial step of the lipid cycle reactions in the biosynthesis of the cell wall peptidoglycan: transfers peptidoglycan precursor phospho-MurNAc-pentapeptide from UDP-MurNAc-pentapeptide onto the lipid carrier undecaprenyl phosphate, yielding undecaprenyl-pyrophosphoryl-MurNAc-pentapeptide, known as lipid I. In Rickettsia rickettsii, this protein is Phospho-N-acetylmuramoyl-pentapeptide-transferase.